A 196-amino-acid chain; its full sequence is Heat shock protein beta-8 (196 aa).

A disordered region spans residues 1–28 (MADGQLPFPCSYPSRLRRDPFRDSPLSS). A phosphoserine mark is found at S24 and S57. Residue T63 is modified to Phosphothreonine. An asymmetric dimethylarginine mark is found at R71 and R78. In terms of domain architecture, sHSP spans 74 to 185 (TATARFGVPA…PFGESSFNNE (112 aa)). The segment at 176-196 (PFGESSFNNELPQDNQEVTCS) is disordered. The segment covering 178–196 (GESSFNNELPQDNQEVTCS) has biased composition (polar residues).

It belongs to the small heat shock protein (HSP20) family. Monomer. Forms a ternary complex with BAG3 and HSPA1A. Component of the chaperone-assisted selective autophagy (CASA) complex consisting of BAG3, HSPA8/HSC70, HSPB8 and STUB1/CHIP. Interacts with HSPB1. Interacts with DNAJB6. Interacts with BAG3. Phosphorylated.

It is found in the cytoplasm. The protein localises to the nucleus. In terms of biological role, involved in the chaperone-assisted selective autophagy (CASA), a crucial process for protein quality control, particularly in mechanical strained cells and tissues such as muscle. Displays temperature-dependent chaperone activity. In Rattus norvegicus (Rat), this protein is Heat shock protein beta-8 (Hspb8).